Here is a 190-residue protein sequence, read N- to C-terminus: Putative protein p47 (190 aa).

The sequence is that of Putative protein p47 (47) from Escherichia coli (Bacteriophage APSE-1).